We begin with the raw amino-acid sequence, 94 residues long: Citrate lyase acyl carrier protein (94 aa).

O-(phosphoribosyl dephospho-coenzyme A)serine is present on serine 14.

It belongs to the CitD family. Oligomer with a subunit composition of (alpha,beta,gamma)6.

The protein resides in the cytoplasm. Functionally, covalent carrier of the coenzyme of citrate lyase. In Halothermothrix orenii (strain H 168 / OCM 544 / DSM 9562), this protein is Citrate lyase acyl carrier protein.